The following is a 467-amino-acid chain: Cytochrome P450 76A1 (467 aa).

Cys-410 contacts heme.

This sequence belongs to the cytochrome P450 family. It depends on heme as a cofactor.

The protein is Cytochrome P450 76A1 (CYP76A1) of Solanum melongena (Eggplant).